Consider the following 210-residue polypeptide: Outer-membrane lipoprotein carrier protein (210 aa).

The first 26 residues, 1–26 (MHMIRRAAGALAVFAVAALAAAPAWA), serve as a signal peptide directing secretion.

It belongs to the LolA family. In terms of assembly, monomer.

It localises to the periplasm. In terms of biological role, participates in the translocation of lipoproteins from the inner membrane to the outer membrane. Only forms a complex with a lipoprotein if the residue after the N-terminal Cys is not an aspartate (The Asp acts as a targeting signal to indicate that the lipoprotein should stay in the inner membrane). The sequence is that of Outer-membrane lipoprotein carrier protein from Bordetella bronchiseptica (strain ATCC BAA-588 / NCTC 13252 / RB50) (Alcaligenes bronchisepticus).